The sequence spans 188 residues: Ribosomal RNA small subunit methyltransferase G (188 aa).

Residues Gly-69, Phe-74, 119 to 120, and Arg-134 contribute to the S-adenosyl-L-methionine site; that span reads VQ.

It belongs to the methyltransferase superfamily. RNA methyltransferase RsmG family.

It is found in the cytoplasm. The catalysed reaction is guanosine(527) in 16S rRNA + S-adenosyl-L-methionine = N(7)-methylguanosine(527) in 16S rRNA + S-adenosyl-L-homocysteine. Functionally, specifically methylates the N7 position of guanine in position 527 of 16S rRNA. The protein is Ribosomal RNA small subunit methyltransferase G of Campylobacter jejuni subsp. jejuni serotype O:23/36 (strain 81-176).